The chain runs to 459 residues: MTDPNTLAARFPGDFLFGVATASFQIEGSTKADGRKPSIWDAFCNMPGHVFGRHNGDIACDHYNRWEEDLDLIKEMGVEAYRFSLAWPRIIPDGFGPINEKGLDFYDRLVDGCKARGIKTYATLYHWDLPLTLMGDGGWASRSTAHAFQRYAKTVMARLGDRLDAVATFNEPWCAVWLSHLYGVHAPGERNMEAALAAMHHINLAHGFGVEASRHVAPKVPVGLVLNAHSAIPASDGEADLKAAERAFQFHNGAFFDPVFKGEYPAEMMEALGDRMPVVEAEDLGIISQKLDWWGLNYYTPMRVADDATPGVEFPATMPAPAVSDVKTDIGWEVYAPALHTLVETLYERYDLPECYITENGACYNMGVENGQVNDQPRLDYYAEHLGIVADLIRDGYPMRGYFAWSLMDNFEWAEGYRMRFGLVHVDYQTQVRTVKNSGKWYSALASGFPKGNHGVAKG.

Glu171 serves as the catalytic Proton donor. Glu359 (nucleophile) is an active-site residue.

It belongs to the glycosyl hydrolase 1 family.

The catalysed reaction is Hydrolysis of terminal, non-reducing beta-D-glucosyl residues with release of beta-D-glucose.. In Agrobacterium sp. (strain ATCC 21400), this protein is Beta-glucosidase (abg).